Consider the following 82-residue polypeptide: Small ribosomal subunit protein bS16 (82 aa).

Belongs to the bacterial ribosomal protein bS16 family.

The chain is Small ribosomal subunit protein bS16 from Elusimicrobium minutum (strain Pei191).